We begin with the raw amino-acid sequence, 2590 residues long: 5-methylorsellinic acid synthase (2590 aa).

An N-terminal acylcarrier protein transacylase domain (SAT) region spans residues leucine 6–alanine 255. The Ketosynthase family 3 (KS3) domain maps to glycine 369–glutamine 784. Active-site for beta-ketoacyl synthase activity residues include cysteine 534, histidine 669, and histidine 707. Residues leucine 891 to proline 1191 are malonyl-CoA:ACP transacylase (MAT) domain. Serine 978 serves as the catalytic For acyl/malonyl transferase activity. Residues proline 1263 to serine 1393 are N-terminal hotdog fold. The PKS/mFAS DH domain occupies proline 1263 to lysine 1569. A product template (PT) domain region spans residues serine 1267 to leucine 1568. Residue histidine 1297 is the Proton acceptor; for dehydratase activity of the active site. A C-terminal hotdog fold region spans residues threonine 1421 to lysine 1569. Aspartate 1481 acts as the Proton donor; for dehydratase activity in catalysis. The tract at residues leucine 1587 to alanine 1612 is disordered. Carrier domains are found at residues alanine 1617 to threonine 1691 and serine 1736 to proline 1812. 2 positions are modified to O-(pantetheine 4'-phosphoryl)serine: serine 1651 and serine 1772. Positions glutamine 1980 to aspartate 2212 are methyltransferase (CMeT) domain. The tract at residues leucine 2282–leucine 2590 is thioesterase (TE) domain.

The catalysed reaction is 3 malonyl-CoA + acetyl-CoA + S-adenosyl-L-methionine + H(+) = 5-methylorsellinate + S-adenosyl-L-homocysteine + 3 CO2 + 4 CoA. The protein operates within secondary metabolite biosynthesis. Its function is as follows. Non-reducing polyketide synthase; part of the cluster A that mediates the biosynthesis of azasperpyranones, members of the azaphilone family that exhibit anti-cancer activities. Azasperpyranones are synthesized by 2 clusters, A and B. Cluster A is responsible for the production of the polyhydric phenol moiety while the azaphilonoid scaffold is produced by the cluster B. The non-reducing polyketide synthase ATEG_03629 produces 5-methyl orsellinic acid, which is then reduced to 5-methyl orsellinic aldehyde by the NRPS-like protein ATEG_03630. 5-methyl orsellinic aldehyde is then first hydroxylated by the FAD-dependent monooxygenase ATEG_03635 and subsequently hydroxylated by the cytochrome P450 monooxygenase ATEG_03631 to produce the unstable polyhydric phenol precursor of azasperpyranones. On the other hand, the polyketide synthase ATEG_07659 is responsible for producing the 3,5-dimethyloctadienone moiety from acetyl-CoA, three malonyl-CoA, and two S-adenosyl methionines (SAM). The 3,5-dimethyloctadienone moiety is then loaded onto the SAT domain of ATEG_07661 and extended with four malonyl-CoA and one SAM, which leads to the formation of 2,4-dihydroxy-6-(5,7-dimethyl-2-oxo-trans-3-trans-5-nonadienyl)-3-methylbenzaldehyde (compound 8) after reductive release and aldol condensation. The FAD-dependent monooxygenase ATEG_07662 is the next enzyme in the biosynthesis sequence and hydroxylates the side chain at the benzylic position of compound 8. In Aspergillus nidulans, afoF, the ortholog of the FAD-dependent oxygenase ATEG_07660, is the key enzyme for the biosynthesis of asperfuranone by catalyzing the hydroxylation at C-8 of to prevent the formation of a six-membered ring hemiacetal intermediate and thus facilitating the formation of a five-membered ring to produce asperfuranone. In Aspergillus terreus, ATEG_07660 is probably not functional, which leads to the formation of the six-membered ring hemiacetal intermediate presperpyranone instead of asperfuranone. Finally, ATEG_03636 is involved in the condensation of the polyhydric phenol moiety produced by cluster A and the perasperpyranone precursor produced by cluster B, to yield azasperpyranone A. Further modifications of azasperpyranone A result in the production of derivatives, including azasperpyranone B to F. The polypeptide is 5-methylorsellinic acid synthase (Aspergillus terreus (strain NIH 2624 / FGSC A1156)).